Consider the following 87-residue polypeptide: Olfactory receptor-like protein HbT2 (87 aa).

Residues 1–8 (KLWRMTGT) lie on the Cytoplasmic side of the membrane. The chain crosses the membrane as a helical span at residues 9–29 (WLGGFCHSIIQIPVIIQLPFC). Residues 30–55 (GPNVIDHYFRDLQPLFKLACTDTFME) are Extracellular-facing. The chain crosses the membrane as a helical span at residues 56–76 (GVIVLAFSGLFSVFSFLILVS). Over 77 to 87 (SYIVILVNLRN) the chain is Cytoplasmic.

Belongs to the G-protein coupled receptor 1 family.

Its subcellular location is the cell membrane. Its function is as follows. Odorant receptor. This chain is Olfactory receptor-like protein HbT2, found in Apis mellifera ligustica (Common honeybee).